The sequence spans 354 residues: MSKVKSITRESWILSTFPEWGSWLNEEIEQEQVAPGTFAMWWLGCTGIWLKSEGGANVCVDFWCGTGKQSHGNPFMKQGHQMQRMAGVKKLQPNLRTTPFVLDPFAIRQIDAVLATHDHNDHIDVNVAAAVMQNCADDVPFIGPKTCVDLWIGWGVPKERCIVVKPGDVVKVKDIEIHALDAFDRTALITLPADQKAAGVLPDGMDDRAVNYLFKTPGGTLYHSGDSHYSNYYAKHGNEHQIDVALGSYGENPRGITDKMTSADILRMGEALNAKVVIPFHHDIWSNFQADPQEIRVLWEMKKDRLKYGFKPFIWQVGGKFTWPLDKDNFEYHYPRGFDDCFTIEPDLPFKSFL.

It belongs to the UlaG family. It depends on a divalent metal cation as a cofactor.

It is found in the cytoplasm. The catalysed reaction is L-ascorbate 6-phosphate + H2O = 3-dehydro-L-gulonate 6-phosphate. It participates in cofactor degradation; L-ascorbate degradation; D-xylulose 5-phosphate from L-ascorbate: step 1/4. Probably catalyzes the hydrolysis of L-ascorbate-6-P into 3-keto-L-gulonate-6-P. Is essential for L-ascorbate utilization under anaerobic conditions. The sequence is that of Probable L-ascorbate-6-phosphate lactonase UlaG from Escherichia coli O127:H6 (strain E2348/69 / EPEC).